Here is a 261-residue protein sequence, read N- to C-terminus: Segregation and condensation protein A (261 aa).

The protein belongs to the ScpA family. As to quaternary structure, component of a cohesin-like complex composed of ScpA, ScpB and the Smc homodimer, in which ScpA and ScpB bind to the head domain of Smc. The presence of the three proteins is required for the association of the complex with DNA.

The protein resides in the cytoplasm. In terms of biological role, participates in chromosomal partition during cell division. May act via the formation of a condensin-like complex containing Smc and ScpB that pull DNA away from mid-cell into both cell halves. This chain is Segregation and condensation protein A, found in Desulfitobacterium hafniense (strain DSM 10664 / DCB-2).